A 291-amino-acid chain; its full sequence is ATP synthase gamma chain (291 aa).

This sequence belongs to the ATPase gamma chain family. F-type ATPases have 2 components, CF(1) - the catalytic core - and CF(0) - the membrane proton channel. CF(1) has five subunits: alpha(3), beta(3), gamma(1), delta(1), epsilon(1). CF(0) has three main subunits: a, b and c.

Its subcellular location is the cell inner membrane. In terms of biological role, produces ATP from ADP in the presence of a proton gradient across the membrane. The gamma chain is believed to be important in regulating ATPase activity and the flow of protons through the CF(0) complex. The protein is ATP synthase gamma chain of Burkholderia lata (strain ATCC 17760 / DSM 23089 / LMG 22485 / NCIMB 9086 / R18194 / 383).